We begin with the raw amino-acid sequence, 136 residues long: Endonuclease II (136 aa).

A GIY-YIG domain is found at 32–131 (KYNVIYAIAI…IKLFNPPWNI (100 aa)).

Homotetramer. Requires Mg(2+) as cofactor.

It catalyses the reaction Endonucleolytic nicking and cleavage of cytosine-containing double-stranded DNA.. Contributes to the degradation of host DNA, permitting the scavenging of host-derived nucleotides for phage DNA synthesis. Sequence-specific endonuclease. Catalyzes nicking of the bottom strand of double-stranded DNA between the first and second base pair to the right of a top-strand CCGC motif. Does not cleave native phage DNA, which contains 5-hydroxymethylcytosine instead of cytosine. This Escherichia coli (Bacteriophage T4) protein is Endonuclease II (denA).